We begin with the raw amino-acid sequence, 386 residues long: 5-hydroxytryptamine receptor 1B (386 aa).

At 1–42 the chain is on the extracellular side; the sequence is MEEQGIQCAPPPPAASQTGVPLVNLSHNCSAESHIYQDSIAL. N24 and N28 each carry an N-linked (GlcNAc...) asparagine glycan. A helical transmembrane segment spans residues 43–68; sequence PWKVLLVALLALITLATTLSNAFVIA. Topologically, residues 69 to 82 are cytoplasmic; it reads TVYRTRKLHTPANY. The chain crosses the membrane as a helical span at residues 83-107; it reads LIASLAVTDLLVSILVMPVSTMYTV. Residues 108 to 115 lie on the Extracellular side of the membrane; it reads TGRWTLGQ. A helical membrane pass occupies residues 116 to 141; that stretch reads VVCDFWLSSDITCCTASIMHLCVIAL. A disulfide bond links C118 and C195. Residues D125 and T130 each coordinate ergotamine. The short motif at 142–144 is the DRY motif; important for ligand-induced conformation changes and signaling element; it reads DRY. Residues 142 to 161 lie on the Cytoplasmic side of the membrane; that stretch reads DRYWAITDAVEYAAKRTPKR. Residues 162-180 form a helical membrane-spanning segment; that stretch reads AAIMIALVWVFSISISLPP. Over 181–201 the chain is Extracellular; sequence FFWRQAKAEEEVLTCLVNTDH. V197 lines the ergotamine pocket. The chain crosses the membrane as a helical span at residues 202-225; the sequence is VLYTVYSTGGAFYLPTLLLIALYG. The Cytoplasmic portion of the chain corresponds to 226–311; that stretch reads RIYVEARSRI…AARERKATKT (86 aa). Residues 255–268 show a composition bias toward polar residues; that stretch reads DSPGSTTSVTSINS. The tract at residues 255–278 is disordered; sequence DSPGSTTSVTSINSRAPDLPSESG. The chain crosses the membrane as a helical span at residues 312 to 333; it reads LGIILGAFIVCWLPFFIISLVM. Over 334 to 343 the chain is Extracellular; that stretch reads PICKDACWFH. A helical membrane pass occupies residues 344 to 366; it reads MATLDFFNWLGYLNSLINPIIYT. Residues 361–365 carry the NPxxY motif; important for ligand-induced conformation changes and signaling motif; the sequence is NPIIY. At 367–386 the chain is on the cytoplasmic side; it reads MSNEDFKQAFHKLIRFKCAG. Residue C384 is the site of S-palmitoyl cysteine attachment.

Belongs to the G-protein coupled receptor 1 family. In terms of assembly, homodimer. Heterodimer with HTR1D. Phosphorylated. Desensitization of the receptor may be mediated by its phosphorylation. Post-translationally, palmitoylated.

Its subcellular location is the cell membrane. In terms of biological role, G-protein coupled receptor for 5-hydroxytryptamine (serotonin). Also functions as a receptor for ergot alkaloid derivatives, various anxiolytic and antidepressant drugs and other psychoactive substances, such as lysergic acid diethylamide (LSD). Ligand binding causes a conformation change that triggers signaling via guanine nucleotide-binding proteins (G proteins) and modulates the activity of downstream effectors, such as adenylate cyclase. HTR1B is coupled to G(i)/G(o) G alpha proteins and mediates inhibitory neurotransmission by inhibiting adenylate cyclase activity. Arrestin family members inhibit signaling via G proteins and mediate activation of alternative signaling pathways. Regulates the release of 5-hydroxytryptamine, dopamine and acetylcholine in the brain, and thereby affects neural activity, nociceptive processing, pain perception, mood and behavior. Besides, plays a role in vasoconstriction of cerebral arteries. The protein is 5-hydroxytryptamine receptor 1B (HTR1B) of Cricetulus griseus (Chinese hamster).